Reading from the N-terminus, the 300-residue chain is Folate-binding protein 1 (300 aa).

Residues 1–28 form the signal peptide; sequence MGRCLTKKVFLIQSPILFLHLLISLSSG. Cystine bridges form between cysteine 38/cysteine 76, cysteine 68/cysteine 111, cysteine 77/cysteine 114, cysteine 102/cysteine 139, and cysteine 132/cysteine 178. A glycan (N-linked (GlcNAc...) asparagine) is linked at asparagine 173. Residues 238–258 form a helical membrane-spanning segment; that stretch reads MTTIQKISLGMSFLIAGMFLI.

This sequence belongs to the folate receptor family. Expressed in leaves.

The protein localises to the membrane. In terms of biological role, folic acid-binding protein involved in salicylic acid- (SA-) induced folate accumulation by triggering uptake and accumulation of folic acid in cells. May be implicated in the transport of the folates from the site of production (leaves) to the site of storage (fruits and seeds) and utilization (roots). The chain is Folate-binding protein 1 from Arabidopsis thaliana (Mouse-ear cress).